The chain runs to 148 residues: Putative nickel-responsive regulator (148 aa).

Ni(2+)-binding residues include histidine 88, histidine 99, histidine 101, and cysteine 107.

Belongs to the transcriptional regulatory CopG/NikR family. Ni(2+) is required as a cofactor.

Functionally, transcriptional regulator. This chain is Putative nickel-responsive regulator, found in Helicobacter acinonychis (strain Sheeba).